Consider the following 146-residue polypeptide: Basic phospholipase A2 (146 aa).

An N-terminal signal peptide occupies residues 1-21 (MNPAHLLVLAAVCVSLLGASS). A propeptide spanning residues 22-27 (VPPRPL) is cleaved from the precursor. 7 disulfides stabilise this stretch: cysteine 38/cysteine 97, cysteine 52/cysteine 145, cysteine 54/cysteine 70, cysteine 69/cysteine 127, cysteine 76/cysteine 120, cysteine 86/cysteine 113, and cysteine 106/cysteine 118. 3 residues coordinate Ca(2+): tyrosine 53, glycine 55, and glycine 57. Histidine 73 is a catalytic residue. Residue aspartate 74 coordinates Ca(2+). Residue asparagine 109 is glycosylated (N-linked (GlcNAc...) asparagine). Aspartate 121 is a catalytic residue.

Belongs to the phospholipase A2 family. Group I subfamily. D49 sub-subfamily. Ca(2+) serves as cofactor. As to expression, expressed by the venom gland.

The protein localises to the secreted. The catalysed reaction is a 1,2-diacyl-sn-glycero-3-phosphocholine + H2O = a 1-acyl-sn-glycero-3-phosphocholine + a fatty acid + H(+). In terms of biological role, PLA2 catalyzes the calcium-dependent hydrolysis of the 2-acyl groups in 3-sn-phosphoglycerides. The polypeptide is Basic phospholipase A2 (Micrurus corallinus (Brazilian coral snake)).